Consider the following 149-residue polypeptide: Large ribosomal subunit protein uL15 (149 aa).

Composition is skewed to basic residues over residues 1 to 14 (MPTH…HRGH) and 21 to 30 (RVGKHRKHPG). Residues 1-42 (MPTHLSKTRKHRGHVSAGHGRVGKHRKHPGGRGLAGGQHHHR) form a disordered region.

This sequence belongs to the universal ribosomal protein uL15 family.

This chain is Large ribosomal subunit protein uL15, found in Blumeria hordei (Barley powdery mildew).